Consider the following 71-residue polypeptide: MRKSFYTWLMTERNPKSNSPKAILADLAFEEAAFPKHTDDFDEVSRFLEEHASFSFNLGDFDAIWQEYLEH.

Belongs to the UPF0346 family.

The chain is UPF0346 protein SPT_1257 from Streptococcus pneumoniae (strain Taiwan19F-14).